Reading from the N-terminus, the 154-residue chain is Myoglobin (154 aa).

A Globin domain is found at 2–148; that stretch reads GLSDGEWQLV…FRNDMAAKYK (147 aa). The residue at position 4 (Ser-4) is a Phosphoserine. His-65 serves as a coordination point for nitrite. Residue His-65 coordinates O2. At Thr-68 the chain carries Phosphothreonine. His-94 is a heme b binding site.

Belongs to the globin family. Monomeric.

It localises to the cytoplasm. The protein resides in the sarcoplasm. It catalyses the reaction Fe(III)-heme b-[protein] + nitric oxide + H2O = Fe(II)-heme b-[protein] + nitrite + 2 H(+). It carries out the reaction H2O2 + AH2 = A + 2 H2O. In terms of biological role, monomeric heme protein which primary function is to store oxygen and facilitate its diffusion within muscle tissues. Reversibly binds oxygen through a pentacoordinated heme iron and enables its timely and efficient release as needed during periods of heightened demand. Depending on the oxidative conditions of tissues and cells, and in addition to its ability to bind oxygen, it also has a nitrite reductase activity whereby it regulates the production of bioactive nitric oxide. Under stress conditions, like hypoxia and anoxia, it also protects cells against reactive oxygen species thanks to its pseudoperoxidase activity. This is Myoglobin (MB) from Aotus trivirgatus (Three-striped night monkey).